We begin with the raw amino-acid sequence, 247 residues long: Probable transcriptional regulatory protein SynWH7803_1972 (247 aa).

Belongs to the TACO1 family.

Its subcellular location is the cytoplasm. The polypeptide is Probable transcriptional regulatory protein SynWH7803_1972 (Synechococcus sp. (strain WH7803)).